Reading from the N-terminus, the 149-residue chain is Ribonuclease H (149 aa).

Residues 1-141 (MKTVTLFSDG…CDTMAREKAT (141 aa)) form the RNase H type-1 domain. Positions 9, 47, 69, and 133 each coordinate Mg(2+).

The protein belongs to the RNase H family. Monomer. The cofactor is Mg(2+).

The protein resides in the cytoplasm. The enzyme catalyses Endonucleolytic cleavage to 5'-phosphomonoester.. In terms of biological role, endonuclease that specifically degrades the RNA of RNA-DNA hybrids. The protein is Ribonuclease H of Campylobacter curvus (strain 525.92).